A 213-amino-acid polypeptide reads, in one-letter code: Imidazole glycerol phosphate synthase subunit HisH 1 (213 aa).

In terms of domain architecture, Glutamine amidotransferase type-1 spans 3–213; it reads SVSIVDYGVG…LSIIQQFLQI (211 aa). C81 serves as the catalytic Nucleophile. Active-site residues include H195 and E197.

Heterodimer of HisH and HisF.

Its subcellular location is the cytoplasm. The catalysed reaction is 5-[(5-phospho-1-deoxy-D-ribulos-1-ylimino)methylamino]-1-(5-phospho-beta-D-ribosyl)imidazole-4-carboxamide + L-glutamine = D-erythro-1-(imidazol-4-yl)glycerol 3-phosphate + 5-amino-1-(5-phospho-beta-D-ribosyl)imidazole-4-carboxamide + L-glutamate + H(+). It catalyses the reaction L-glutamine + H2O = L-glutamate + NH4(+). It functions in the pathway amino-acid biosynthesis; L-histidine biosynthesis; L-histidine from 5-phospho-alpha-D-ribose 1-diphosphate: step 5/9. IGPS catalyzes the conversion of PRFAR and glutamine to IGP, AICAR and glutamate. The HisH subunit provides the glutamine amidotransferase activity that produces the ammonia necessary to HisF for the synthesis of IGP and AICAR. In Legionella pneumophila (strain Paris), this protein is Imidazole glycerol phosphate synthase subunit HisH 1.